The sequence spans 82 residues: Small ribosomal subunit protein uS17 (82 aa).

The protein belongs to the universal ribosomal protein uS17 family. Part of the 30S ribosomal subunit.

Its function is as follows. One of the primary rRNA binding proteins, it binds specifically to the 5'-end of 16S ribosomal RNA. In Shewanella halifaxensis (strain HAW-EB4), this protein is Small ribosomal subunit protein uS17.